We begin with the raw amino-acid sequence, 112 residues long: Cytochrome c (112 aa).

Cys-23, Cys-26, His-27, and Met-89 together coordinate heme c.

This sequence belongs to the cytochrome c family. Post-translationally, binds 1 heme c group covalently per subunit.

The protein resides in the mitochondrion intermembrane space. Functionally, electron carrier protein. The oxidized form of the cytochrome c heme group can accept an electron from the heme group of the cytochrome c1 subunit of cytochrome reductase. Cytochrome c then transfers this electron to the cytochrome oxidase complex, the final protein carrier in the mitochondrial electron-transport chain. In Chlamydomonas reinhardtii (Chlamydomonas smithii), this protein is Cytochrome c (CYC1).